The sequence spans 380 residues: MNVELQLDPRRTVPAWLAYGTPVLTVLAALAVGGVALVALNVDPVDAYGVMFVETLTSQFGLTEVLVRAVPLILAGLAVYLPLKAGLFNIGAEGQLLLGALAGTWVAVNVSLPAVALLPLMFLAACVAGAFWAGIPAWLRAKWDVNEIITSLLLTFVAQELQSYLLRGPMQGGTGNFPQSARFSDAATLPPLAGLVPGGESIPLFADVHAGLLVAVAAVVATYVVMTKTRLGFEVTFVGSNDEAARQAGMSRHTVYLFVFLLGGAFAALGGIAEIAGSQGRFRAAFAPGYGFTAIPIALLGRNSAVKVTLAGLFFAVLFVGGSSVEVAFGVPAALVEIIQALVILFLITSEFFKRYRVGIAFDRRGNDAPADATGGDARW.

Transmembrane regions (helical) follow at residues 20–40 (GTPV…LVAL), 59–81 (QFGL…AVYL), 94–114 (GQLL…SLPA), 115–135 (VALL…WAGI), 148–166 (IITS…SYLL), 202–222 (IPLF…VVAT), 255–275 (VYLF…IAEI), 282–301 (FRAA…ALLG), 305–325 (AVKV…GSSV), and 328–348 (AFGV…LFLI).

It belongs to the binding-protein-dependent transport system permease family. The complex is composed of two ATP-binding proteins (TsgD13), two transmembrane proteins (TsgB13 and TsgC13) and a solute-binding protein (TsgA13).

Its subcellular location is the cell membrane. Functionally, part of an ABC transporter complex involved in glucose import. Responsible for the translocation of the substrate across the membrane. This chain is Glucose ABC transporter permease protein TsgB13 (tsgB13), found in Haloferax volcanii (strain ATCC 29605 / DSM 3757 / JCM 8879 / NBRC 14742 / NCIMB 2012 / VKM B-1768 / DS2) (Halobacterium volcanii).